A 39-amino-acid chain; its full sequence is Fructose 5-dehydrogenase [NADP(+)] (39 aa).

The enzyme catalyses D-fructose + NADP(+) = 5-dehydro-D-fructose + NADPH + H(+). The sequence is that of Fructose 5-dehydrogenase [NADP(+)] from Erwinia citreus.